Reading from the N-terminus, the 680-residue chain is Oligopeptidase A (680 aa).

His-469 contacts Zn(2+). Residue Glu-470 is part of the active site. Residues His-473 and His-476 each contribute to the Zn(2+) site.

The protein belongs to the peptidase M3 family. Zn(2+) is required as a cofactor.

The enzyme catalyses Hydrolysis of oligopeptides, with broad specificity. Gly or Ala commonly occur as P1 or P1' residues, but more distant residues are also important, as is shown by the fact that Z-Gly-Pro-Gly-|-Gly-Pro-Ala is cleaved, but not Z-(Gly)(5).. In terms of biological role, may play a specific role in the degradation of signal peptides after they are released from precursor forms of secreted proteins. Can cleave N-acetyl-L-Ala(4). The sequence is that of Oligopeptidase A (prlC) from Escherichia coli (strain K12).